Here is a 209-residue protein sequence, read N- to C-terminus: MICOS complex subunit mic19 (209 aa).

2 coiled-coil regions span residues 48-86 and 127-156; these read LELEIQNRVAKELERLRAREQQTLAEIEKRLSEAKDTGS and EVAAVNKELNRESVNSEIEELRVKLEGRKK.

The protein belongs to the MICOS complex subunit Mic19 family. In terms of assembly, component of the mitochondrial contact site and cristae organizing system (MICOS) complex.

The protein resides in the mitochondrion inner membrane. Its function is as follows. Component of the MICOS complex, a large protein complex of the mitochondrial inner membrane that plays crucial roles in the maintenance of crista junctions, inner membrane architecture, and formation of contact sites to the outer membrane. Involved in osmoadaptation. This chain is MICOS complex subunit mic19, found in Emericella nidulans (strain FGSC A4 / ATCC 38163 / CBS 112.46 / NRRL 194 / M139) (Aspergillus nidulans).